The following is a 132-amino-acid chain: SH2 domain-containing protein 1B2 (132 aa).

The region spanning 5-101 (YYHGCLTKRE…GMVVHLSNPI (97 aa)) is the SH2 domain.

As to quaternary structure, interacts with SLAMF1 (phosphorylated). Interacts with CD244. Interacts with Src kinases HCK, LYN, FYN, FGR and LCK (via kinase domains). In terms of tissue distribution, expressed in spleen. Expressed in macrophages, CD8(+) T-Cells and NK cells. Conflictingly found only in NK cells.

The protein localises to the cytoplasm. Cytoplasmic adapter regulating receptors of the signaling lymphocytic activation molecule (SLAM) family. In SLAM signaling may cooperate with Sh2d1a/SAP. Plays a role in regulation of effector functions of natural killer (NK) cells by controlling signal transduction through Cd244/2b4. However, conflicting results are reported which may reflect the use of different strain backgrounds. Proposed to act as an inhibitor of Cd244-mediated NK cell function including cytotoxicity and IFN-gamma production, the latter found also by triggering Klra4 and Klrk1 next to Cd244. Seems to positively regulate Cd244- and Cd84-dependent NK cell functions implicating Cd244-mediated phosphorylation of Vav1. The protein is SH2 domain-containing protein 1B2 (Sh2d1b2) of Mus musculus (Mouse).